A 243-amino-acid chain; its full sequence is Proteasome subunit beta (243 aa).

The propeptide at 1–49 (MRTPTGDLSDGPAEELGRDQPVFGPEIGEFEHSERRAAQADGEGEMKTG) is removed in mature form; by autocatalysis. A disordered region spans residues 1–50 (MRTPTGDLSDGPAEELGRDQPVFGPEIGEFEHSERRAAQADGEGEMKTGT). Positions 29 to 38 (EFEHSERRAA) are enriched in basic and acidic residues. Thr50 functions as the Nucleophile in the catalytic mechanism.

The protein belongs to the peptidase T1B family. In terms of assembly, the 20S proteasome core is composed of 14 alpha and 14 beta subunits that assemble into four stacked heptameric rings, resulting in a barrel-shaped structure. The two inner rings, each composed of seven catalytic beta subunits, are sandwiched by two outer rings, each composed of seven alpha subunits. The catalytic chamber with the active sites is on the inside of the barrel. Has a gated structure, the ends of the cylinder being occluded by the N-termini of the alpha-subunits. Is capped at one or both ends by the proteasome regulatory ATPase, PAN.

The protein resides in the cytoplasm. It carries out the reaction Cleavage of peptide bonds with very broad specificity.. The formation of the proteasomal ATPase PAN-20S proteasome complex, via the docking of the C-termini of PAN into the intersubunit pockets in the alpha-rings, triggers opening of the gate for substrate entry. Interconversion between the open-gate and close-gate conformations leads to a dynamic regulation of the 20S proteasome proteolysis activity. In terms of biological role, component of the proteasome core, a large protease complex with broad specificity involved in protein degradation. This is Proteasome subunit beta from Halorubrum lacusprofundi (strain ATCC 49239 / DSM 5036 / JCM 8891 / ACAM 34).